The following is a 173-amino-acid chain: T-cell surface glycoprotein CD3 delta chain (173 aa).

The first 21 residues, 1–21 (MEHSGILASLILIAVLPQGSP), serve as a signal peptide directing secretion. The Extracellular portion of the chain corresponds to 22 to 105 (FKIQVTEYED…CVELDSGTMA (84 aa)). The cysteines at positions 37 and 73 are disulfide-linked. Asparagine 38, asparagine 55, and asparagine 74 each carry an N-linked (GlcNAc...) asparagine glycan. The helical transmembrane segment at 106-126 (GVIFIDLIATLLLALGVYCFA) threads the bilayer. The Cytoplasmic portion of the chain corresponds to 127-173 (GHETGRPSGAAEVQALLKNEQLYQPLRDREDTQYSRLGGNWPRNKKS). The region spanning 138–166 (EVQALLKNEQLYQPLRDREDTQYSRLGGN) is the ITAM domain. 2 positions are modified to phosphotyrosine: tyrosine 149 and tyrosine 160.

The TCR-CD3 complex is composed of a CD3D/CD3E and a CD3G/CD3E heterodimers that preferentially associate with TCRalpha and TCRbeta, respectively, to form TCRalpha/CD3E/CD3G and TCRbeta/CD3G/CD3E trimers. In turn, the hexamer interacts with CD3Z homodimer to form the TCR-CD3 complex. Alternatively, TCRalpha and TCRbeta can be replaced by TCRgamma and TCRdelta. Interacts with coreceptors CD4 and CD8. Phosphorylated on Tyr residues after T-cell receptor triggering by LCK in association with CD4/CD8.

It localises to the membrane. Functionally, part of the TCR-CD3 complex present on T-lymphocyte cell surface that plays an essential role in adaptive immune response. When antigen presenting cells (APCs) activate T-cell receptor (TCR), TCR-mediated signals are transmitted across the cell membrane by the CD3 chains CD3D, CD3E, CD3G and CD3Z. All CD3 chains contain immunoreceptor tyrosine-based activation motifs (ITAMs) in their cytoplasmic domain. Upon TCR engagement, these motifs become phosphorylated by Src family protein tyrosine kinases LCK and FYN, resulting in the activation of downstream signaling pathways. In addition of this role of signal transduction in T-cell activation, CD3D plays an essential role in thymocyte differentiation. Indeed, participates in correct intracellular TCR-CD3 complex assembly and surface expression. In absence of a functional TCR-CD3 complex, thymocytes are unable to differentiate properly. Interacts with CD4 and CD8 and thus serves to establish a functional link between the TCR and coreceptors CD4 and CD8, which is needed for activation and positive selection of CD4 or CD8 T-cells. The chain is T-cell surface glycoprotein CD3 delta chain (Cd3d) from Mus musculus (Mouse).